The sequence spans 273 residues: 4-hydroxy-tetrahydrodipicolinate reductase (273 aa).

Residues 12–17 (GAGGRM) and glutamate 38 contribute to the NAD(+) site. Arginine 39 lines the NADP(+) pocket. NAD(+)-binding positions include 102 to 104 (GTT) and 126 to 129 (AANF). Residue histidine 159 is the Proton donor/acceptor of the active site. Histidine 160 is a (S)-2,3,4,5-tetrahydrodipicolinate binding site. Lysine 163 acts as the Proton donor in catalysis. 169-170 (GT) contacts (S)-2,3,4,5-tetrahydrodipicolinate.

It belongs to the DapB family. Homotetramer.

The protein localises to the cytoplasm. It carries out the reaction (S)-2,3,4,5-tetrahydrodipicolinate + NAD(+) + H2O = (2S,4S)-4-hydroxy-2,3,4,5-tetrahydrodipicolinate + NADH + H(+). It catalyses the reaction (S)-2,3,4,5-tetrahydrodipicolinate + NADP(+) + H2O = (2S,4S)-4-hydroxy-2,3,4,5-tetrahydrodipicolinate + NADPH + H(+). It participates in amino-acid biosynthesis; L-lysine biosynthesis via DAP pathway; (S)-tetrahydrodipicolinate from L-aspartate: step 4/4. In terms of biological role, catalyzes the conversion of 4-hydroxy-tetrahydrodipicolinate (HTPA) to tetrahydrodipicolinate. This is 4-hydroxy-tetrahydrodipicolinate reductase from Escherichia coli O157:H7.